A 256-amino-acid chain; its full sequence is ATP-dependent dethiobiotin synthetase BioD (256 aa).

13-18 (EVGKTY) serves as a coordination point for ATP. Thr-17 is a Mg(2+) binding site. The active site involves Lys-38. Ser-42 provides a ligand contact to substrate. Residues Asp-56, 118–121 (EGAG), and 187–188 (NR) each bind ATP. Mg(2+)-binding residues include Asp-56 and Glu-118.

Belongs to the dethiobiotin synthetase family. Homodimer. Requires Mg(2+) as cofactor.

It localises to the cytoplasm. It carries out the reaction (7R,8S)-7,8-diammoniononanoate + CO2 + ATP = (4R,5S)-dethiobiotin + ADP + phosphate + 3 H(+). The protein operates within cofactor biosynthesis; biotin biosynthesis; biotin from 7,8-diaminononanoate: step 1/2. Functionally, catalyzes a mechanistically unusual reaction, the ATP-dependent insertion of CO2 between the N7 and N8 nitrogen atoms of 7,8-diaminopelargonic acid (DAPA, also called 7,8-diammoniononanoate) to form a ureido ring. The sequence is that of ATP-dependent dethiobiotin synthetase BioD from Rhodopirellula baltica (strain DSM 10527 / NCIMB 13988 / SH1).